We begin with the raw amino-acid sequence, 29 residues long: Brevinin-2Ed (29 aa).

An intrachain disulfide couples cysteine 23 to cysteine 29.

The protein belongs to the frog skin active peptide (FSAP) family. Brevinin subfamily. Expressed by the skin glands.

The protein localises to the secreted. Shows antibacterial activity against representative Gram-negative and Gram-positive bacterial species, and hemolytic activity. The sequence is that of Brevinin-2Ed from Pelophylax lessonae (Pool frog).